The following is a 477-amino-acid chain: Glutamyl-tRNA(Gln) amidotransferase subunit A (477 aa).

Residues Lys71 and Ser146 each act as charge relay system in the active site. Catalysis depends on Ser170, which acts as the Acyl-ester intermediate.

This sequence belongs to the amidase family. GatA subfamily. As to quaternary structure, heterotrimer of A, B and C subunits.

The catalysed reaction is L-glutamyl-tRNA(Gln) + L-glutamine + ATP + H2O = L-glutaminyl-tRNA(Gln) + L-glutamate + ADP + phosphate + H(+). Functionally, allows the formation of correctly charged Gln-tRNA(Gln) through the transamidation of misacylated Glu-tRNA(Gln) in organisms which lack glutaminyl-tRNA synthetase. The reaction takes place in the presence of glutamine and ATP through an activated gamma-phospho-Glu-tRNA(Gln). This is Glutamyl-tRNA(Gln) amidotransferase subunit A from Halothermothrix orenii (strain H 168 / OCM 544 / DSM 9562).